A 225-amino-acid polypeptide reads, in one-letter code: Ribose-5-phosphate isomerase A (225 aa).

Substrate-binding positions include 26–29, 82–85, and 95–98; these read TGST, DGAD, and KGGG. Residue Glu104 is the Proton acceptor of the active site. Residue Lys122 participates in substrate binding.

It belongs to the ribose 5-phosphate isomerase family. Homodimer.

The catalysed reaction is aldehydo-D-ribose 5-phosphate = D-ribulose 5-phosphate. The protein operates within carbohydrate degradation; pentose phosphate pathway; D-ribose 5-phosphate from D-ribulose 5-phosphate (non-oxidative stage): step 1/1. Its function is as follows. Catalyzes the reversible conversion of ribose-5-phosphate to ribulose 5-phosphate. The protein is Ribose-5-phosphate isomerase A of Streptococcus mutans serotype c (strain ATCC 700610 / UA159).